The sequence spans 75 residues: Putative sulfur carrier protein YrkI (75 aa).

The active-site Cysteine persulfide intermediate is Cys14.

Belongs to the sulfur carrier protein TusA family.

The chain is Putative sulfur carrier protein YrkI (yrkI) from Bacillus subtilis (strain 168).